A 332-amino-acid chain; its full sequence is Glycerol-3-phosphate dehydrogenase [NAD(P)+] (332 aa).

4 residues coordinate NADPH: serine 11, phenylalanine 12, lysine 32, and lysine 106. Sn-glycerol 3-phosphate-binding residues include lysine 106, glycine 137, and serine 139. Alanine 141 provides a ligand contact to NADPH. Residues lysine 192, aspartate 245, serine 255, arginine 256, and asparagine 257 each contribute to the sn-glycerol 3-phosphate site. Lysine 192 acts as the Proton acceptor in catalysis. Arginine 256 provides a ligand contact to NADPH. 2 residues coordinate NADPH: valine 280 and glutamate 282.

The protein belongs to the NAD-dependent glycerol-3-phosphate dehydrogenase family.

Its subcellular location is the cytoplasm. It carries out the reaction sn-glycerol 3-phosphate + NAD(+) = dihydroxyacetone phosphate + NADH + H(+). The catalysed reaction is sn-glycerol 3-phosphate + NADP(+) = dihydroxyacetone phosphate + NADPH + H(+). Its pathway is membrane lipid metabolism; glycerophospholipid metabolism. Catalyzes the reduction of the glycolytic intermediate dihydroxyacetone phosphate (DHAP) to sn-glycerol 3-phosphate (G3P), the key precursor for phospholipid synthesis. This is Glycerol-3-phosphate dehydrogenase [NAD(P)+] from Staphylococcus aureus (strain bovine RF122 / ET3-1).